The sequence spans 198 residues: Leucyl/phenylalanyl-tRNA--protein transferase (198 aa).

Belongs to the L/F-transferase family.

The protein resides in the cytoplasm. The enzyme catalyses N-terminal L-lysyl-[protein] + L-leucyl-tRNA(Leu) = N-terminal L-leucyl-L-lysyl-[protein] + tRNA(Leu) + H(+). The catalysed reaction is N-terminal L-arginyl-[protein] + L-leucyl-tRNA(Leu) = N-terminal L-leucyl-L-arginyl-[protein] + tRNA(Leu) + H(+). It catalyses the reaction L-phenylalanyl-tRNA(Phe) + an N-terminal L-alpha-aminoacyl-[protein] = an N-terminal L-phenylalanyl-L-alpha-aminoacyl-[protein] + tRNA(Phe). Its function is as follows. Functions in the N-end rule pathway of protein degradation where it conjugates Leu, Phe and, less efficiently, Met from aminoacyl-tRNAs to the N-termini of proteins containing an N-terminal arginine or lysine. The protein is Leucyl/phenylalanyl-tRNA--protein transferase of Synechocystis sp. (strain ATCC 27184 / PCC 6803 / Kazusa).